The primary structure comprises 158 residues: Small ribosomal subunit protein uS7 (158 aa).

The protein belongs to the universal ribosomal protein uS7 family. As to quaternary structure, part of the 30S ribosomal subunit. Contacts proteins S9 and S11.

In terms of biological role, one of the primary rRNA binding proteins, it binds directly to 16S rRNA where it nucleates assembly of the head domain of the 30S subunit. Is located at the subunit interface close to the decoding center, probably blocks exit of the E-site tRNA. The chain is Small ribosomal subunit protein uS7 from Flavobacterium psychrophilum (strain ATCC 49511 / DSM 21280 / CIP 103535 / JIP02/86).